Reading from the N-terminus, the 156-residue chain is Small ribosomal subunit protein uS7 (156 aa).

Belongs to the universal ribosomal protein uS7 family. As to quaternary structure, part of the 30S ribosomal subunit. Contacts proteins S9 and S11.

Its function is as follows. One of the primary rRNA binding proteins, it binds directly to 16S rRNA where it nucleates assembly of the head domain of the 30S subunit. Is located at the subunit interface close to the decoding center, probably blocks exit of the E-site tRNA. The protein is Small ribosomal subunit protein uS7 of Cronobacter sakazakii (strain ATCC BAA-894) (Enterobacter sakazakii).